A 140-amino-acid chain; its full sequence is Large ribosomal subunit protein bL17 (140 aa).

It belongs to the bacterial ribosomal protein bL17 family. Part of the 50S ribosomal subunit. Contacts protein L32.

In Beijerinckia indica subsp. indica (strain ATCC 9039 / DSM 1715 / NCIMB 8712), this protein is Large ribosomal subunit protein bL17.